The following is a 494-amino-acid chain: mRNA decay activator protein ZFP36L2 (494 aa).

A Phosphoserine modification is found at Ser-57. Residues 93–113 (GGPTSYGTLKEPSGGGGTALL) are disordered. Ser-125 is subject to Phosphoserine. The RNA-binding signature appears at 153–158 (RYKTEL). 2 consecutive C3H1-type zinc fingers follow at residues 153–181 (RYKT…HGFH) and 191–219 (KYKT…HNAD). The RNA-binding stretch occupies residues 170–211 (YGEKCQFAHGFHELRSLTRHPKYKTELCRTFHTIGFCPYGPR). Thr-238 bears the Phosphothreonine mark. Disordered regions lie at residues 257–293 (SLSF…PPSC) and 397–494 (QQQQ…ISDD). The segment covering 406 to 415 (PAQPPAPPSA) has biased composition (pro residues). Low complexity-rich tracts occupy residues 416-435 (TLPA…QLPR) and 459-478 (YLSG…PSLD). Residues Ser-490 and Ser-492 each carry the phosphoserine; by RPS6KA1 modification.

As to quaternary structure, associates with the cytoplasmic CCR4-NOT deadenylase to trigger ARE-containing mRNA deadenylation and decay processes. Interacts with CNOT7; this interaction is inhibited in response to phorbol 12-myristate 13-acetate (PMA) treatment in a p38 MAPK-dependent manner. Interacts with CNOT6L. In terms of processing, phosphorylated by RPS6KA1 at Ser-490 and Ser-492 upon phorbol 12-myristate 13-acetate (PMA) treatment; this phosphorylation results in dissociation of the CCR4-NOT-deadenylase complex and induces p38 MAPK-mediated stabilization of the low-density lipoprotein (LDL) receptor (LDLR) mRNA. Phosphorylation occurs during early preadipocyte differentiation. As to expression, expressed mainly in the basal epidermal layer, weakly in the suprabasal epidermal layers. Expressed in epidermal keratinocytes (at protein level). Expressed in oocytes.

Its subcellular location is the nucleus. The protein localises to the cytoplasm. Functionally, zinc-finger RNA-binding protein that destabilizes several cytoplasmic AU-rich element (ARE)-containing mRNA transcripts by promoting their poly(A) tail removal or deadenylation, and hence provide a mechanism for attenuating protein synthesis. Acts as a 3'-untranslated region (UTR) ARE mRNA-binding adapter protein to communicate signaling events to the mRNA decay machinery. Functions by recruiting the CCR4-NOT deadenylase complex and probably other components of the cytoplasmic RNA decay machinery to the bound ARE-containing mRNAs, and hence promotes ARE-mediated mRNA deadenylation and decay processes. Binds to 3'-UTR ARE of numerous mRNAs. Promotes ARE-containing mRNA decay of the low-density lipoprotein (LDL) receptor (LDLR) mRNA in response to phorbol 12-myristate 13-acetate (PMA) treatment in a p38 MAPK-dependent manner. Positively regulates early adipogenesis by promoting ARE-mediated mRNA decay of immediate early genes (IEGs). Plays a role in mature peripheral neuron integrity by promoting ARE-containing mRNA decay of the transcriptional repressor REST mRNA. Plays a role in ovulation and oocyte meiotic maturation by promoting ARE-mediated mRNA decay of the luteinizing hormone receptor LHCGR mRNA. Acts as a negative regulator of erythroid cell differentiation: promotes glucocorticoid-induced self-renewal of erythroid cells by binding mRNAs that are induced or highly expressed during terminal erythroid differentiation and promotes their degradation, preventing erythroid cell differentiation. In association with ZFP36L1 maintains quiescence on developing B lymphocytes by promoting ARE-mediated decay of several mRNAs encoding cell cycle regulators that help B cells progress through the cell cycle, and hence ensuring accurate variable-diversity-joining (VDJ) recombination process and functional immune cell formation. Together with ZFP36L1 is also necessary for thymocyte development and prevention of T-cell acute lymphoblastic leukemia (T-ALL) transformation by promoting ARE-mediated mRNA decay of the oncogenic transcription factor NOTCH1 mRNA. In Homo sapiens (Human), this protein is mRNA decay activator protein ZFP36L2.